The chain runs to 199 residues: Octanoyltransferase (199 aa).

The BPL/LPL catalytic domain maps to 27–199 (SNSCDELWLL…FVQYFLTQFK (173 aa)). Residues 66–73 (RGGQVTYH), 133–135 (SIG), and 146–148 (GIA) contribute to the substrate site. Cysteine 164 acts as the Acyl-thioester intermediate in catalysis.

It belongs to the LipB family.

The protein localises to the cytoplasm. It catalyses the reaction octanoyl-[ACP] + L-lysyl-[protein] = N(6)-octanoyl-L-lysyl-[protein] + holo-[ACP] + H(+). The protein operates within protein modification; protein lipoylation via endogenous pathway; protein N(6)-(lipoyl)lysine from octanoyl-[acyl-carrier-protein]: step 1/2. Functionally, catalyzes the transfer of endogenously produced octanoic acid from octanoyl-acyl-carrier-protein onto the lipoyl domains of lipoate-dependent enzymes. Lipoyl-ACP can also act as a substrate although octanoyl-ACP is likely to be the physiological substrate. This chain is Octanoyltransferase, found in Legionella pneumophila (strain Corby).